The sequence spans 181 residues: Probable cobalt-precorrin-6B C(15)-methyltransferase (decarboxylating) (181 aa).

S-adenosyl-L-methionine contacts are provided by residues Thr-16, 40-44 (GCGSG), Asp-61, and Ala-89.

The protein belongs to the methyltransferase superfamily. Archaeal-type CbiT family.

The enzyme catalyses Co-precorrin-6B + S-adenosyl-L-methionine = Co-precorrin-7 + S-adenosyl-L-homocysteine + CO2. The protein operates within cofactor biosynthesis; adenosylcobalamin biosynthesis; cob(II)yrinate a,c-diamide from sirohydrochlorin (anaerobic route): step 8/10. Its function is as follows. Catalyzes the methylation of C-15 in cobalt-precorrin-6B followed by the decarboxylation of C-12 to form cobalt-precorrin-7. The chain is Probable cobalt-precorrin-6B C(15)-methyltransferase (decarboxylating) from Methanococcus maripaludis (strain C5 / ATCC BAA-1333).